A 78-amino-acid polypeptide reads, in one-letter code: Metallothionein-like protein type 2 (78 aa).

This sequence belongs to the metallothionein superfamily. Type 15 family.

Its function is as follows. Metallothioneins have a high content of cysteine residues that bind various heavy metals. The polypeptide is Metallothionein-like protein type 2 (Actinidia deliciosa (Kiwi)).